The primary structure comprises 300 residues: 4-hydroxy-tetrahydrodipicolinate synthase (300 aa).

Position 45 (Thr-45) interacts with pyruvate. Tyr-140 acts as the Proton donor/acceptor in catalysis. Catalysis depends on Lys-169, which acts as the Schiff-base intermediate with substrate. Pyruvate is bound at residue Ile-210.

The protein belongs to the DapA family. Homotetramer; dimer of dimers.

It localises to the cytoplasm. It carries out the reaction L-aspartate 4-semialdehyde + pyruvate = (2S,4S)-4-hydroxy-2,3,4,5-tetrahydrodipicolinate + H2O + H(+). It functions in the pathway amino-acid biosynthesis; L-lysine biosynthesis via DAP pathway; (S)-tetrahydrodipicolinate from L-aspartate: step 3/4. Functionally, catalyzes the condensation of (S)-aspartate-beta-semialdehyde [(S)-ASA] and pyruvate to 4-hydroxy-tetrahydrodipicolinate (HTPA). The sequence is that of 4-hydroxy-tetrahydrodipicolinate synthase from Helicobacter pylori (strain J99 / ATCC 700824) (Campylobacter pylori J99).